A 254-amino-acid polypeptide reads, in one-letter code: Type III pantothenate kinase (254 aa).

Residue 6 to 13 (DLGNSAIK) coordinates ATP. Residues Y99 and 106–109 (GVDR) contribute to the substrate site. Residue D108 is the Proton acceptor of the active site. D128 serves as a coordination point for K(+). Residue T131 coordinates ATP. T182 contacts substrate.

This sequence belongs to the type III pantothenate kinase family. In terms of assembly, homodimer. Requires NH4(+) as cofactor. K(+) is required as a cofactor.

It is found in the cytoplasm. The catalysed reaction is (R)-pantothenate + ATP = (R)-4'-phosphopantothenate + ADP + H(+). Its pathway is cofactor biosynthesis; coenzyme A biosynthesis; CoA from (R)-pantothenate: step 1/5. Catalyzes the phosphorylation of pantothenate (Pan), the first step in CoA biosynthesis. The protein is Type III pantothenate kinase of Halorhodospira halophila (strain DSM 244 / SL1) (Ectothiorhodospira halophila (strain DSM 244 / SL1)).